The following is a 121-amino-acid chain: Large ribosomal subunit protein eL31 (121 aa).

The protein belongs to the eukaryotic ribosomal protein eL31 family.

This chain is Large ribosomal subunit protein eL31 (RPL31), found in Perilla frutescens (Beefsteak mint).